We begin with the raw amino-acid sequence, 138 residues long: Probable non-specific lipid-transfer protein 1 (138 aa).

A signal peptide spans 1 to 36; that stretch reads MRTVSARSSVALVVIVAAVLVWTSSASVAPAPAPGS. Disulfide bonds link Cys-40/Cys-88, Cys-50/Cys-65, Cys-66/Cys-111, and Cys-86/Cys-127.

The protein belongs to the plant LTP family.

Plant non-specific lipid-transfer proteins transfer phospholipids as well as galactolipids across membranes. May play a role in wax or cutin deposition in the cell walls of expanding epidermal cells and certain secretory tissues. This Parietaria judaica (Pellitory-of-the-wall) protein is Probable non-specific lipid-transfer protein 1.